The primary structure comprises 161 residues: uncharacterized protein (161 aa).

Polar residues predominate over residues 1-10 (MSKQQEQDTP). Disordered regions lie at residues 1 to 20 (MSKQQEQDTPSFGEIRQRLQ), 55 to 84 (KKTREEQIAEDEHAASLRRLGHAERSMSDE), and 118 to 161 (LLQQ…ANNS). The stretch at 82–107 (SDEEYARQLQEEMDRLDASIQMDKEA) forms a coiled coil. Over residues 144–161 (QQSSNTTTSSSCQSANNS) the composition is skewed to low complexity.

This is an uncharacterized protein from Caenorhabditis elegans.